Consider the following 571-residue polypeptide: Medium/long-chain-fatty-acid--CoA ligase FadD8 (571 aa).

The disordered stretch occupies residues 1-22 (MSTAGDDAVGVPPACGGRSDAV).

It belongs to the ATP-dependent AMP-binding enzyme family.

The catalysed reaction is a medium-chain fatty acid + ATP + CoA = a medium-chain fatty acyl-CoA + AMP + diphosphate. It carries out the reaction a long-chain fatty acid + ATP + CoA = a long-chain fatty acyl-CoA + AMP + diphosphate. The enzyme catalyses hexanoate + ATP + CoA = hexanoyl-CoA + AMP + diphosphate. It catalyses the reaction dodecanoate + ATP + CoA = dodecanoyl-CoA + AMP + diphosphate. The catalysed reaction is hexadecanoate + ATP + CoA = hexadecanoyl-CoA + AMP + diphosphate. Its pathway is lipid metabolism; fatty acid metabolism. Catalyzes the activation of medium/long-chain fatty acids as acyl-coenzyme A (acyl-CoA). This chain is Medium/long-chain-fatty-acid--CoA ligase FadD8, found in Mycobacterium tuberculosis (strain ATCC 25618 / H37Rv).